A 156-amino-acid polypeptide reads, in one-letter code: Small ribosomal subunit protein uS7 (156 aa).

This sequence belongs to the universal ribosomal protein uS7 family. Part of the 30S ribosomal subunit. Contacts proteins S9 and S11.

Functionally, one of the primary rRNA binding proteins, it binds directly to 16S rRNA where it nucleates assembly of the head domain of the 30S subunit. Is located at the subunit interface close to the decoding center, probably blocks exit of the E-site tRNA. In Desulfitobacterium hafniense (strain Y51), this protein is Small ribosomal subunit protein uS7.